Consider the following 283-residue polypeptide: Shikimate kinase (283 aa).

86–96 lines the ATP pocket; the sequence is PIKSGLSSSSA.

Belongs to the GHMP kinase family. Archaeal shikimate kinase subfamily.

The protein resides in the cytoplasm. It carries out the reaction shikimate + ATP = 3-phosphoshikimate + ADP + H(+). Its pathway is metabolic intermediate biosynthesis; chorismate biosynthesis; chorismate from D-erythrose 4-phosphate and phosphoenolpyruvate: step 5/7. The protein is Shikimate kinase of Methanococcus maripaludis (strain C5 / ATCC BAA-1333).